The primary structure comprises 124 residues: Large ribosomal subunit protein bL19 (124 aa).

This sequence belongs to the bacterial ribosomal protein bL19 family.

Its function is as follows. This protein is located at the 30S-50S ribosomal subunit interface and may play a role in the structure and function of the aminoacyl-tRNA binding site. The polypeptide is Large ribosomal subunit protein bL19 (Cereibacter sphaeroides (strain ATCC 17029 / ATH 2.4.9) (Rhodobacter sphaeroides)).